Reading from the N-terminus, the 525-residue chain is Frizzled-4 (525 aa).

An N-terminal signal peptide occupies residues 1–24 (MERRGGGGRMLALLLAGLLGGARG). Residues 25 to 200 (FGDEEERRCD…KCGYDAGLYS (176 aa)) are Extracellular-facing. The FZ domain occupies 28-149 (EEERRCDAIR…NDHNHMCMEG (122 aa)). 8 cysteine pairs are disulfide-bonded: Cys-33-Cys-94, Cys-41-Cys-87, Cys-78-Cys-116, Cys-105-Cys-146, Cys-109-Cys-133, Cys-169-Cys-188, Cys-192-Cys-270, and Cys-290-Cys-365. N-linked (GlcNAc...) asparagine glycosylation is present at Asn-47. A glycan (N-linked (GlcNAc...) asparagine) is linked at Asn-132. The helical transmembrane segment at 201–231 (RSAKEFTDIWMAVWASLCFISTAFTVLTFLI) threads the bilayer. The Cytoplasmic portion of the chain corresponds to 232–237 (DSSRFS). A helical membrane pass occupies residues 238-263 (YPERPIIFLSMCYNIYSIAYIVRLTV). The Extracellular segment spans residues 264–287 (GRERISCDFEEAAEPVLIQEGLKN). Residues 288-321 (TGCAIIFLLMYFFGMASSIWWVILTLTWFLAAGL) form a helical membrane-spanning segment. At 322–324 (KWG) the chain is on the cytoplasmic side. Residues 325-353 (HEAIEMHSSYFHIAAWAIPAVKTIVILIM) form a helical membrane-spanning segment. The Extracellular portion of the chain corresponds to 354–371 (RLVDADELTGLCYVGNQN). Residues 372–406 (LDALTGFVVAPLFTYLVIGTLFIAAGLVALFKIRS) traverse the membrane as a helical segment. Residues 407-419 (NLQKDGTKTDKLE) lie on the Cytoplasmic side of the membrane. The helical transmembrane segment at 420-448 (RLMVKIGVFSVLYTVPATCVIACYFYEIS) threads the bilayer. Topologically, residues 449–461 (NWAVFRYSADDSN) are extracellular. The helical transmembrane segment at 462-483 (MAVEMLKIFMSLLVGITSGMWI) threads the bilayer. Residues 484–525 (WSAKTLHTWQKCSNRLVNSGKVKREKRADGWVKPGKGNETVV) are Cytoplasmic-facing. Positions 487–492 (KTLHTW) match the Lys-Thr-X-X-X-Trp motif, mediates interaction with the PDZ domain of Dvl family members motif. The PDZ-binding signature appears at 523–525 (TVV).

This sequence belongs to the G-protein coupled receptor Fz/Smo family. In terms of assembly, interacts (via FZ domain) with TSKU; TSKU competes with WNT2B for binding to FZD4, inhibiting Wnt signaling and repressing peripheral eye development. As to expression, expressed in the developing kidney, interdigital spaces and optic cup.

Its subcellular location is the cell membrane. Functionally, receptor for Wnt proteins. Most frizzled receptors are coupled to the beta-catenin canonical signaling pathway, which leads to the activation of disheveled proteins, inhibition of GSK-3 kinase, nuclear accumulation of beta-catenin and activation of Wnt target genes. A second signaling pathway involving PKC and calcium fluxes has been seen for some family members, but it is not yet clear if it represents a distinct pathway or if it can be integrated in the canonical pathway, as PKC seems to be required for Wnt-mediated inactivation of GSK-3 kinase. Both pathways seem to involve interactions with G-proteins. May be involved in transduction and intercellular transmission of polarity information during tissue morphogenesis and/or in differentiated tissues. This Gallus gallus (Chicken) protein is Frizzled-4 (FZD4).